The following is a 275-amino-acid chain: Nuclear egress protein 2 (275 aa).

Topologically, residues 1 to 251 are perinuclear space; it reads MDSYNYRDFA…SERVKRRPVR (251 aa). The segment at 197–221 is disordered; it reads CDRSNGIVSPREHRECRERQKRRPT. A helical membrane pass occupies residues 252-272; that stretch reads IAAAILAFVFVAVILAIATKG. The Nuclear portion of the chain corresponds to 273–275; that stretch reads RLF.

The protein belongs to the herpesviridae NEC2 protein family. In terms of assembly, forms a heterohexameric complex with NEC1. Post-translationally, phosphorylated.

Its subcellular location is the host nucleus inner membrane. Plays an essential role in virion nuclear egress, the first step of virion release from infected cell. Within the host nucleus, NEC1 interacts with the newly formed capsid through the vertexes and directs it to the inner nuclear membrane by associating with NEC2. Induces the budding of the capsid at the inner nuclear membrane as well as its envelopment into the perinuclear space. There, the NEC1/NEC2 complex promotes the fusion of the enveloped capsid with the outer nuclear membrane and the subsequent release of the viral capsid into the cytoplasm where it will reach the secondary budding sites in the host Golgi or trans-Golgi network. The protein is Nuclear egress protein 2 of Equus caballus (Horse).